The sequence spans 192 residues: Small ribosomal subunit protein uS4B (192 aa).

One can recognise an S4 RNA-binding domain in the interval 83–145 (RRLDNLVYRL…SRKIQTYASN (63 aa)).

Belongs to the universal ribosomal protein uS4 family. As to quaternary structure, part of the 30S ribosomal subunit. Contacts protein S5. The interaction surface between S4 and S5 is involved in control of translational fidelity.

Its function is as follows. One of the primary rRNA binding proteins, it binds directly to 16S rRNA where it nucleates assembly of the body of the 30S subunit. In terms of biological role, with S5 and S12 plays an important role in translational accuracy. The protein is Small ribosomal subunit protein uS4B (rpsD2) of Clostridium acetobutylicum (strain ATCC 824 / DSM 792 / JCM 1419 / IAM 19013 / LMG 5710 / NBRC 13948 / NRRL B-527 / VKM B-1787 / 2291 / W).